Consider the following 356-residue polypeptide: Thrombopoietin (356 aa).

A signal peptide spans 1 to 21; that stretch reads MELTDLLLAAMLLAVARLTLS. Intrachain disulfides connect cysteine 28/cysteine 172 and cysteine 50/cysteine 106. Asparagine 197, asparagine 206, asparagine 235, asparagine 249, asparagine 256, asparagine 336, and asparagine 351 each carry an N-linked (GlcNAc...) asparagine glycan. Residues 291–356 are disordered; it reads GGLPPSPSLA…PHPRNLSQET (66 aa). Over residues 330–339 the composition is skewed to polar residues; the sequence is PSTTMPNSTA.

This sequence belongs to the EPO/TPO family. As to expression, found mainly in the liver, kidney and skeletal muscle.

Its subcellular location is the secreted. Its function is as follows. Lineage-specific cytokine affecting the proliferation and maturation of megakaryocytes from their committed progenitor cells. It acts at a late stage of megakaryocyte development. It may be the major physiological regulator of circulating platelets. This chain is Thrombopoietin (Thpo), found in Mus musculus (Mouse).